A 492-amino-acid chain; its full sequence is UDP-glucosyl transferase 73DL1 (492 aa).

The active-site Proton acceptor is histidine 27. The active-site Charge relay is aspartate 131. UDP contacts are provided by tryptophan 352, valine 353, histidine 370, threonine 375, glutamate 378, and tyrosine 392.

Belongs to the UDP-glycosyltransferase family. In terms of tissue distribution, mainly expressed in flowers, flower buds and young leaves, and, to a lesser extent, in old leaves, stems and roots.

The protein operates within secondary metabolite biosynthesis; terpenoid biosynthesis. Component of the oleanane-type triterpene saponins (e.g. saponarioside A and saponarioside B) biosynthetic pathway, leading to the production of natural products with detergent properties used as traditional sources of soap. A glycosyltransferase that mediates the conversion of QA-mono to QA-di via the elongation of the C-3 sugar chain with a D-galactose. The protein is UDP-glucosyl transferase 73DL1 of Saponaria officinalis (Common soapwort).